The chain runs to 260 residues: Cytochrome c oxidase subunit 3 (260 aa).

7 helical membrane-spanning segments follow: residues 14 to 34, 41 to 61, 81 to 101, 126 to 146, 158 to 178, 196 to 216, and 238 to 258; these read PWPL…ILWF, LLLA…RDVI, GMIL…WAFF, FLVP…VTWA, AIQG…LQAW, FFVA…FLFI, and AWYW…ICWW.

The protein belongs to the cytochrome c oxidase subunit 3 family. In terms of assembly, component of the cytochrome c oxidase (complex IV, CIV), a multisubunit enzyme composed of a catalytic core of 3 subunits and several supernumerary subunits. The complex exists as a monomer or a dimer and forms supercomplexes (SCs) in the inner mitochondrial membrane with ubiquinol-cytochrome c oxidoreductase (cytochrome b-c1 complex, complex III, CIII).

Its subcellular location is the mitochondrion inner membrane. The enzyme catalyses 4 Fe(II)-[cytochrome c] + O2 + 8 H(+)(in) = 4 Fe(III)-[cytochrome c] + 2 H2O + 4 H(+)(out). Component of the cytochrome c oxidase, the last enzyme in the mitochondrial electron transport chain which drives oxidative phosphorylation. The respiratory chain contains 3 multisubunit complexes succinate dehydrogenase (complex II, CII), ubiquinol-cytochrome c oxidoreductase (cytochrome b-c1 complex, complex III, CIII) and cytochrome c oxidase (complex IV, CIV), that cooperate to transfer electrons derived from NADH and succinate to molecular oxygen, creating an electrochemical gradient over the inner membrane that drives transmembrane transport and the ATP synthase. Cytochrome c oxidase is the component of the respiratory chain that catalyzes the reduction of oxygen to water. Electrons originating from reduced cytochrome c in the intermembrane space (IMS) are transferred via the dinuclear copper A center (CU(A)) of subunit 2 and heme A of subunit 1 to the active site in subunit 1, a binuclear center (BNC) formed by heme A3 and copper B (CU(B)). The BNC reduces molecular oxygen to 2 water molecules using 4 electrons from cytochrome c in the IMS and 4 protons from the mitochondrial matrix. The polypeptide is Cytochrome c oxidase subunit 3 (COIII) (Patiria pectinifera (Starfish)).